The primary structure comprises 413 residues: Snake venom metalloproteinase AaPA (413 aa).

Residues 1 to 20 (MIQVLLVTICLAAFPYQGSS) form the signal peptide. The propeptide occupies 21–189 (IILESGKVND…KKASQLIVST (169 aa)). The Peptidase M12B domain maps to 193–390 (RYMEIVIVVD…ENPPCILNKP (198 aa)). Residues glutamate 196 and aspartate 280 each coordinate Ca(2+). 3 cysteine pairs are disulfide-bonded: cysteine 304–cysteine 385, cysteine 344–cysteine 369, and cysteine 346–cysteine 352. Position 329 (histidine 329) interacts with Zn(2+). The active site involves glutamate 330. 2 residues coordinate Zn(2+): histidine 333 and histidine 339. Residues cysteine 385, asparagine 388, valine 400, asparagine 403, leucine 405, glutamate 407, and aspartate 413 each coordinate Ca(2+). Residues 391–413 (LRTDTVSTPVSGNELLEAEKDYD) constitute a propeptide that is removed on maturation.

The protein belongs to the venom metalloproteinase (M12B) family. P-I subfamily. As to quaternary structure, monomer. Requires Zn(2+) as cofactor. As to expression, expressed by the venom gland.

The protein localises to the secreted. Snake venom zinc metalloprotease that may activate prothrombin. The sequence is that of Snake venom metalloproteinase AaPA from Deinagkistrodon acutus (Hundred-pace snake).